The sequence spans 132 residues: Dormancy-associated protein 1 (132 aa).

The interval Met-53 to Val-76 is disordered. Residues Thr-61–Thr-70 are compositionally biased toward low complexity. Residue Thr-64 is modified to Phosphothreonine.

The protein belongs to the DRM1/ARP family. In terms of tissue distribution, isoform 1: Expressed mainly in the low bolt. Isoform 2: Expressed mainly in the low bolt. Detected in flowers. Isoform 4: Expressed mainly in the low bolt. Isoform 5: Expressed mainly in the 6 days old seedlings. Detected in 16 days old seedlings, axil, low bolt and floral samples, but only barely in leaves and top bolt.

The sequence is that of Dormancy-associated protein 1 from Arabidopsis thaliana (Mouse-ear cress).